Reading from the N-terminus, the 102-residue chain is Small ribosomal subunit protein uS10 (102 aa).

The protein belongs to the universal ribosomal protein uS10 family. In terms of assembly, part of the 30S ribosomal subunit.

Functionally, involved in the binding of tRNA to the ribosomes. The sequence is that of Small ribosomal subunit protein uS10 from Malacoplasma penetrans (strain HF-2) (Mycoplasma penetrans).